The primary structure comprises 808 residues: Sucrose synthase (808 aa).

Positions 271–753 (MLFRIALISP…GIERVYSTYT (483 aa)) are GT-B glycosyltransferase.

This sequence belongs to the glycosyltransferase 1 family. As to quaternary structure, probably a homotetramer.

It catalyses the reaction an NDP-alpha-D-glucose + D-fructose = a ribonucleoside 5'-diphosphate + sucrose + H(+). The catalysed reaction is ADP-alpha-D-glucose + D-fructose = sucrose + ADP + H(+). Functionally, catalyzes the reversible conversion of sucrose and a nucleotide disphosphate (NDP) into fructose and NDP-glucose; although the reaction is freely reversible in vitro, the physiological reaction seems to be sucrose cleavage. Unlike characterized plant enzymes prefers ADP as a cosubstrate, whereas plants prefer UDP. Its preference for ADP over UDP suggests it may directly link sucrose and glycogen metabolism. In Thermosynechococcus vestitus (strain NIES-2133 / IAM M-273 / BP-1), this protein is Sucrose synthase.